The chain runs to 225 residues: NAD(P)H-quinone oxidoreductase subunit K, chloroplastic (225 aa).

Cys-43, Cys-44, Cys-108, and Cys-139 together coordinate [4Fe-4S] cluster.

It belongs to the complex I 20 kDa subunit family. NDH is composed of at least 16 different subunits, 5 of which are encoded in the nucleus. Requires [4Fe-4S] cluster as cofactor.

The protein resides in the plastid. Its subcellular location is the chloroplast thylakoid membrane. It carries out the reaction a plastoquinone + NADH + (n+1) H(+)(in) = a plastoquinol + NAD(+) + n H(+)(out). It catalyses the reaction a plastoquinone + NADPH + (n+1) H(+)(in) = a plastoquinol + NADP(+) + n H(+)(out). Its function is as follows. NDH shuttles electrons from NAD(P)H:plastoquinone, via FMN and iron-sulfur (Fe-S) centers, to quinones in the photosynthetic chain and possibly in a chloroplast respiratory chain. The immediate electron acceptor for the enzyme in this species is believed to be plastoquinone. Couples the redox reaction to proton translocation, and thus conserves the redox energy in a proton gradient. The polypeptide is NAD(P)H-quinone oxidoreductase subunit K, chloroplastic (Nasturtium officinale (Watercress)).